Consider the following 534-residue polypeptide: C-type lectin domain family 18 member A (534 aa).

Residues 47 to 88 are disordered; it reads GALPVAGKPEPMARSLASAPVSPWHHMDRGSTTPAKARSHSA. The SCP domain occupies 139 to 270; it reads LTAHNRLRSR…EAMEAFVCAY (132 aa). In terms of domain architecture, EGF-like spans 316 to 349; that stretch reads PRNPCRMSCRNLGHLNISTCRCHCQPGYTGRYCQ. Cystine bridges form between cysteine 324-cysteine 337, cysteine 339-cysteine 348, cysteine 415-cysteine 520, and cysteine 496-cysteine 512. Positions 394 to 521 constitute a C-type lectin domain; that stretch reads IDGDCFMVSP…CKTRNRYICQ (128 aa).

The protein resides in the secreted. This is C-type lectin domain family 18 member A (Clec18a) from Mus musculus (Mouse).